The primary structure comprises 293 residues: ATP synthase gamma chain (293 aa).

It belongs to the ATPase gamma chain family. As to quaternary structure, F-type ATPases have 2 components, CF(1) - the catalytic core - and CF(0) - the membrane proton channel. CF(1) has five subunits: alpha(3), beta(3), gamma(1), delta(1), epsilon(1). CF(0) has three main subunits: a, b and c.

It is found in the cell membrane. Its function is as follows. Produces ATP from ADP in the presence of a proton gradient across the membrane. The gamma chain is believed to be important in regulating ATPase activity and the flow of protons through the CF(0) complex. This Methylacidiphilum infernorum (isolate V4) (Methylokorus infernorum (strain V4)) protein is ATP synthase gamma chain.